We begin with the raw amino-acid sequence, 754 residues long: 5-methyltetrahydropteroyltriglutamate--homocysteine methyltransferase (754 aa).

Residues 17 to 20 (RELK) and lysine 117 each bind 5-methyltetrahydropteroyltri-L-glutamate. L-homocysteine is bound by residues 431-433 (IGS) and glutamate 484. L-methionine-binding positions include 431-433 (IGS) and glutamate 484. Residues 515–516 (RC) and tryptophan 561 each bind 5-methyltetrahydropteroyltri-L-glutamate. L-homocysteine is bound at residue aspartate 599. Residue aspartate 599 coordinates L-methionine. Glutamate 605 is a 5-methyltetrahydropteroyltri-L-glutamate binding site. The Zn(2+) site is built by histidine 641, cysteine 643, and glutamate 665. The active-site Proton donor is histidine 694. Cysteine 726 contributes to the Zn(2+) binding site.

This sequence belongs to the vitamin-B12 independent methionine synthase family. The cofactor is Zn(2+).

The catalysed reaction is 5-methyltetrahydropteroyltri-L-glutamate + L-homocysteine = tetrahydropteroyltri-L-glutamate + L-methionine. It participates in amino-acid biosynthesis; L-methionine biosynthesis via de novo pathway; L-methionine from L-homocysteine (MetE route): step 1/1. Its function is as follows. Catalyzes the transfer of a methyl group from 5-methyltetrahydrofolate to homocysteine resulting in methionine formation. This Pectobacterium atrosepticum (strain SCRI 1043 / ATCC BAA-672) (Erwinia carotovora subsp. atroseptica) protein is 5-methyltetrahydropteroyltriglutamate--homocysteine methyltransferase.